The primary structure comprises 102 residues: Large ribosomal subunit protein bL21 (102 aa).

This sequence belongs to the bacterial ribosomal protein bL21 family. In terms of assembly, part of the 50S ribosomal subunit. Contacts protein L20.

Functionally, this protein binds to 23S rRNA in the presence of protein L20. The polypeptide is Large ribosomal subunit protein bL21 (Nocardioides sp. (strain ATCC BAA-499 / JS614)).